A 491-amino-acid polypeptide reads, in one-letter code: CTD small phosphatase-like protein 1 (491 aa).

Disordered stretches follow at residues 1-53 (MTYA…SLDY), 140-198 (KLTK…TARR), 221-249 (KIQS…TGPP), and 261-282 (TVTG…DGVT). Pro residues predominate over residues 17-26 (VPPPRTPVGP). Over residues 37 to 49 (SASQPLQPKNGAN) the composition is skewed to polar residues. Residues 141–156 (LTKDEKNGGKMNRDGG) show a composition bias toward basic and acidic residues. Polar residues predominate over residues 176 to 187 (ASTPLNSFSANA). Low complexity predominate over residues 223-237 (QSSQRTNSTNNNHQN). 2 stretches are compositionally biased toward polar residues: residues 238–249 (GRPSTPTNTGPP) and 264–276 (GLPT…QQNG). One can recognise an FCP1 homology domain in the interval 307–465 (QDSNKKCLVI…LDILPSLEHL (159 aa)). Residue Asp317 is the 4-aspartylphosphate intermediate of the active site. 3 residues coordinate Mg(2+): Asp317, Asp319, and Asn428. Asp319 functions as the Proton donor in the catalytic mechanism.

May interact (via phosphatase domain) with cpna-1. Isoform a and isoform b may interact with lim-9 (via LIM zinc-binding domain). Isoform a and isoform b may interact (via FCP1 homology domain) with unc-89 (via fibronectin type-III domain 1, Ig-like C2-type domain 48/49 and protein kinase domain 1 or Ig-like C2-type domain 50, fibronectin type-III domain 2 and protein kinase domain 2); the interaction may act as a molecular bridge to bring two unc-89 molecules together or to stabilize a loop between the 2 protein kinase domains. Mg(2+) is required as a cofactor. Expressed in pharyngeal, vulval and body wall muscles.

The protein resides in the cytoplasm. The protein localises to the myofibril. Its subcellular location is the sarcomere. It is found in the m line. It catalyses the reaction O-phospho-L-seryl-[protein] + H2O = L-seryl-[protein] + phosphate. The catalysed reaction is O-phospho-L-threonyl-[protein] + H2O = L-threonyl-[protein] + phosphate. Its activity is regulated as follows. Inhibited by beryllium trifluoride (BeF(3-)) and tetrafluoroaluminate (AlF(4-)) but not by sodium fluoride (NaF) or sodium orthovanadate (Na3VO4). Its function is as follows. Phosphatase which may play a role in the egg laying muscles. The chain is CTD small phosphatase-like protein 1 from Caenorhabditis elegans.